The chain runs to 21 residues: Cupiennin-6e (21 aa).

Ser-21 is modified (serine amide).

Expressed by the venom gland.

It is found in the secreted. The polypeptide is Cupiennin-6e (Cupiennius salei (American wandering spider)).